A 404-amino-acid chain; its full sequence is Cysteine desulfurase IscS (404 aa).

Pyridoxal 5'-phosphate is bound by residues 75–76, Asn-155, Gln-183, and 203–205; these read AT and SGH. N6-(pyridoxal phosphate)lysine is present on Lys-206. Thr-243 lines the pyridoxal 5'-phosphate pocket. The Cysteine persulfide intermediate role is filled by Cys-328. Cys-328 contacts [2Fe-2S] cluster.

Belongs to the class-V pyridoxal-phosphate-dependent aminotransferase family. NifS/IscS subfamily. As to quaternary structure, homodimer. Forms a heterotetramer with IscU, interacts with other sulfur acceptors. The cofactor is pyridoxal 5'-phosphate.

It localises to the cytoplasm. It catalyses the reaction (sulfur carrier)-H + L-cysteine = (sulfur carrier)-SH + L-alanine. Its pathway is cofactor biosynthesis; iron-sulfur cluster biosynthesis. Master enzyme that delivers sulfur to a number of partners involved in Fe-S cluster assembly, tRNA modification or cofactor biosynthesis. Catalyzes the removal of elemental sulfur atoms from cysteine to produce alanine. Functions as a sulfur delivery protein for Fe-S cluster synthesis onto IscU, an Fe-S scaffold assembly protein, as well as other S acceptor proteins. The protein is Cysteine desulfurase IscS of Shewanella baltica (strain OS185).